The following is a 121-amino-acid chain: Ribonuclease P protein component (121 aa).

This sequence belongs to the RnpA family. As to quaternary structure, consists of a catalytic RNA component (M1 or rnpB) and a protein subunit.

The enzyme catalyses Endonucleolytic cleavage of RNA, removing 5'-extranucleotides from tRNA precursor.. Functionally, RNaseP catalyzes the removal of the 5'-leader sequence from pre-tRNA to produce the mature 5'-terminus. It can also cleave other RNA substrates such as 4.5S RNA. The protein component plays an auxiliary but essential role in vivo by binding to the 5'-leader sequence and broadening the substrate specificity of the ribozyme. The polypeptide is Ribonuclease P protein component (Lactobacillus delbrueckii subsp. bulgaricus (strain ATCC 11842 / DSM 20081 / BCRC 10696 / JCM 1002 / NBRC 13953 / NCIMB 11778 / NCTC 12712 / WDCM 00102 / Lb 14)).